Here is an 824-residue protein sequence, read N- to C-terminus: Putative beta-glucuronidase (824 aa).

A helical transmembrane segment spans residues 26-43; that stretch reads YLKLVLVLYLIMVSWSGY. Glutamate 430 acts as the Proton donor in catalysis.

It belongs to the glycosyl hydrolase 2 family.

It is found in the membrane. It carries out the reaction a beta-D-glucuronoside + H2O = D-glucuronate + an alcohol. In terms of biological role, glycoside hydrolase that may be involved in ulvan degradation. Ulvan is the main polysaccharide component of the Ulvales (green seaweed) cell wall. It is composed of disaccharide building blocks comprising 3-sulfated rhamnose (Rha3S) linked to D-glucuronic acid (GlcA), L-iduronic acid (IduA), or D-xylose (Xyl). This Formosa agariphila (strain DSM 15362 / KCTC 12365 / LMG 23005 / KMM 3901 / M-2Alg 35-1) protein is Putative beta-glucuronidase.